The following is a 301-amino-acid chain: tRNA dimethylallyltransferase 1 (301 aa).

11–18 (GPTGVGKT) contributes to the ATP binding site. 13-18 (TGVGKT) serves as a coordination point for substrate. The interval 36 to 39 (DSRQ) is interaction with substrate tRNA.

It belongs to the IPP transferase family. As to quaternary structure, monomer. The cofactor is Mg(2+).

The catalysed reaction is adenosine(37) in tRNA + dimethylallyl diphosphate = N(6)-dimethylallyladenosine(37) in tRNA + diphosphate. Functionally, catalyzes the transfer of a dimethylallyl group onto the adenine at position 37 in tRNAs that read codons beginning with uridine, leading to the formation of N6-(dimethylallyl)adenosine (i(6)A). This Bacteroides fragilis (strain YCH46) protein is tRNA dimethylallyltransferase 1.